We begin with the raw amino-acid sequence, 127 residues long: Anti-adapter protein IraD (127 aa).

This sequence belongs to the GpW/Gp25 family. IraD subfamily. Interacts with RssB.

It localises to the cytoplasm. Functionally, inhibits RpoS proteolysis by regulating RssB activity, thereby increasing the stability of the sigma stress factor RpoS during oxidative stress. Its effect on RpoS stability is due to its interaction with RssB, which probably blocks the interaction of RssB with RpoS, and the consequent delivery of the RssB-RpoS complex to the ClpXP protein degradation pathway. The sequence is that of Anti-adapter protein IraD from Escherichia coli O127:H6 (strain E2348/69 / EPEC).